Here is a 444-residue protein sequence, read N- to C-terminus: Platelet-activating factor acetylhydrolase (444 aa).

The first 21 residues, 1–21, serve as a signal peptide directing secretion; the sequence is MLPSKLHALFCLCTCLALVYP. 2 N-linked (GlcNAc...) asparagine glycosylation sites follow: Asn60 and Asn200. Ser274 serves as the catalytic Nucleophile. Residues Asp297 and His352 each act as charge relay system in the active site. 2 N-linked (GlcNAc...) asparagine glycosylation sites follow: Asn424 and Asn434.

It belongs to the AB hydrolase superfamily. Lipase family. N-glycosylated. As to expression, plasma.

The protein localises to the secreted. The protein resides in the extracellular space. It carries out the reaction a 1-O-alkyl-2-acetyl-sn-glycero-3-phosphocholine + H2O = a 1-O-alkyl-sn-glycero-3-phosphocholine + acetate + H(+). The catalysed reaction is 1-O-decyl-2-acetyl-sn-glycero-3-phosphocholine + H2O = 1-O-decyl-sn-glycero-3-phosphocholine + acetate + H(+). It catalyses the reaction 1-O-dodecyl-2-acetyl-sn-glycero-3-phosphocholine + H2O = 1-O-dodecyl-sn-glycero-3-phosphocholine + acetate + H(+). The enzyme catalyses 1-O-tetradecyl-2-acetyl-sn-glycero-3-phosphocholine + H2O = 1-O-tetradecyl-sn-glycero-3-phosphocholine + acetate + H(+). It carries out the reaction 1-O-hexadecyl-2-acetyl-sn-glycero-3-phosphocholine + H2O = 1-O-hexadecyl-sn-glycero-3-phosphocholine + acetate + H(+). The catalysed reaction is 1-O-octadecyl-2-acetyl-sn-glycero-3-phosphocholine + H2O = 1-O-octadecyl-sn-glycero-3-phosphocholine + acetate + H(+). It catalyses the reaction 1-hexadecanoyl-2-acetyl-sn-glycero-3-phosphocholine + H2O = 1-hexadecanoyl-sn-glycero-3-phosphocholine + acetate + H(+). The enzyme catalyses 1-hexadecanoyl-2-propionyl-sn-glycero-3-phosphocholine + H2O = propanoate + 1-hexadecanoyl-sn-glycero-3-phosphocholine + H(+). It carries out the reaction 1-hexadecanoyl-2-butanoyl-sn-glycero-3-phosphocholine + H2O = butanoate + 1-hexadecanoyl-sn-glycero-3-phosphocholine + H(+). The catalysed reaction is 1-hexadecanoyl-2-pentanoyl-sn-glycero-3-phosphocholine + H2O = pentanoate + 1-hexadecanoyl-sn-glycero-3-phosphocholine + H(+). It catalyses the reaction 1-hexadecanoyl-2-glutaroyl-sn-glycero-3-phosphocholine + H2O = glutarate + 1-hexadecanoyl-sn-glycero-3-phosphocholine + H(+). The enzyme catalyses 1-hexadecanoyl-2-(5-oxopentanoyl)-sn-glycero-3-phosphocholine + H2O = 5-oxopentanoate + 1-hexadecanoyl-sn-glycero-3-phosphocholine + H(+). It carries out the reaction 1-hexadecanoyl-2-(9-oxononanoyl)-sn-glycero-3-phosphocholine + H2O = 9-oxononanoate + 1-hexadecanoyl-sn-glycero-3-phosphocholine + H(+). The catalysed reaction is 1-hexadecanoyl-2-[9-hydroperoxy-(10E-octadecenoyl)]-sn-glycero-3-phosphocholine + H2O = 9-hydroperoxy-10E-octadecenoate + 1-hexadecanoyl-sn-glycero-3-phosphocholine + H(+). It catalyses the reaction 1-hexadecanoyl-2-(10-hydroperoxy-8E-octadecenoyl)-sn-glycero-3-phosphocholine + H2O = 10-hydroperoxy-(8E)-octadecenoate + 1-hexadecanoyl-sn-glycero-3-phosphocholine + H(+). In terms of biological role, lipoprotein-associated calcium-independent phospholipase A2 involved in phospholipid catabolism during inflammatory and oxidative stress response. At the lipid-aqueous interface, hydrolyzes the ester bond of fatty acyl group attached at sn-2 position of phospholipids (phospholipase A2 activity). Specifically targets phospholipids with a short-chain fatty acyl group at sn-2 position. Can hydrolyze phospholipids with long fatty acyl chains, only if they carry oxidized functional groups. Hydrolyzes and inactivates platelet-activating factor (PAF, 1-O-alkyl-2-acetyl-sn-glycero-3-phosphocholine), a potent pro-inflammatory signaling lipid that acts through PTAFR on various innate immune cells. Hydrolyzes oxidatively truncated phospholipids carrying an aldehyde group at omega position, preventing their accumulation in low-density lipoprotein (LDL) particles and uncontrolled pro-inflammatory effects. As part of high-density lipoprotein (HDL) particles, can hydrolyze phospholipids having long-chain fatty acyl hydroperoxides at sn-2 position and protect against potential accumulation of these oxylipins in the vascular wall. Catalyzes the release from membrane phospholipids of F2-isoprostanes, lipid biomarkers of cellular oxidative damage. This chain is Platelet-activating factor acetylhydrolase (PLA2G7), found in Bos taurus (Bovine).